Here is a 373-residue protein sequence, read N- to C-terminus: Zinc finger protein CONSTANS (373 aa).

The B box-type 1; atypical zinc finger occupies 15–57 (NRARPCDTCRSNACTVYCHADSAYLCMSCDAQVHSANRVASRH). Positions 20, 23, 43, 48, 63, 66, 86, and 91 each coordinate Zn(2+). The B box-type 2; atypical zinc finger occupies 58-108 (KRVRVCESCERAPAAFLCEADDASLCTACDSEVHSANPLARRHQRVPILPI). Residues 109–120 (SGNSFSSMTTTH) are compositionally biased toward polar residues. Residues 109–130 (SGNSFSSMTTTHHQSEKTMTDP) are disordered. Residues 121–130 (HQSEKTMTDP) show a composition bias toward basic and acidic residues. The CCT domain maps to 306-348 (REARVLRYREKRKTRKFEKTIRYASRKAYAEIRPRVNGRFAKR).

Belongs to the CONSTANS family. In terms of assembly, interacts with ADO3, SPA1, SPA2, SPA3 and SPA4. Interacts with MRG1 and MRG2 (via MRG domain). Interacts (via B-box) with MIP1A. Interacts with AS1 to form a functional complex regulating FT expression. Interacts with NFYC9. Component of a red light-dependent nuclear complex made of PHL, PHYB and CO. Interacts directly with PHL in the presence of PHYB. In terms of tissue distribution, expressed in leaves, shoots and shoot apical meristem. Detected in the vascular tissue of the hypocotyl, the cotyledons and the leaves. Restricted to the protoxylem and phloem in young inflorescence stems and to the phloem only in older inflorescences. Also detected in the vascular tissue of the root.

The protein localises to the nucleus. Transcription factor that acts in the long day flowering pathway and may mediate between the circadian clock and the control of flowering. Plays a role in the regulation of flowering time by acting on 'SUPPRESSOR OF OVEREXPRESSION OF CO1', 'TERMINAL FLOWER 1' and 'FLOWERING LOCUS T'. Also regulates P5CS2 and ACS10 (involved in proline and ethylene biosynthesis, respectively). Regulates the expression of NAKR1 by binding to the 5'-TGTG(N2-3)ATG-3' motif. The polypeptide is Zinc finger protein CONSTANS (Arabidopsis thaliana (Mouse-ear cress)).